We begin with the raw amino-acid sequence, 506 residues long: Cysteine protease 1 (506 aa).

A disordered region spans residues 1–21; the sequence is MTSSRPSGRDSTGWQETVSNT. Cysteine 226 serves as the catalytic Nucleophile. Active-site residues include aspartate 399 and histidine 401.

This sequence belongs to the peptidase C54 family.

It is found in the cytoplasm. Its subcellular location is the nucleus. It localises to the preautophagosomal structure. The catalysed reaction is [protein]-C-terminal L-amino acid-glycyl-phosphatidylethanolamide + H2O = [protein]-C-terminal L-amino acid-glycine + a 1,2-diacyl-sn-glycero-3-phosphoethanolamine. Cysteine protease that plays a key role in cytoplasm to vacuole transport (Cvt) and autophagy by mediating both proteolytic activation and delipidation of ATG8. Required for selective autophagic degradation of the nucleus (nucleophagy) as well as for mitophagy which contributes to regulate mitochondrial quantity and quality by eliminating the mitochondria to a basal level to fulfill cellular energy requirements and preventing excess ROS production. The protease activity is required for proteolytic activation of ATG8: cleaves the C-terminal amino acid of ATG8 to reveal a C-terminal glycine. ATG8 ubiquitin-like activity requires the exposure of the glycine at the C-terminus for its conjugation to phosphatidylethanolamine (PE) and its insertion to membranes, which is necessary for autophagy. The ATG8-PE conjugate mediates tethering between adjacent membranes and stimulates membrane hemifusion, leading to expansion of the autophagosomal membrane during autophagy. In addition to the protease activity, also catalyzes deconjugation of PE-conjugated forms of ATG8 during macroautophagy: ATG8 delipidation is required to release the protein from membranes, which facilitates multiple events during macroautophagy, and especially for efficient autophagosome biogenesis, the assembly of ATG9-containing tubulovesicular clusters into phagophores/autophagosomes, and for the disassembly of PAS-associated ATG components. ATG8 delipidation by ATG4 also recycles ATG8-PE generated on inappropriate membranes to maintain a reservoir of unlipidated ATG8 that is required for autophagosome formation at the PAS. The chain is Cysteine protease 1 (cpr-1) from Neurospora crassa (strain ATCC 24698 / 74-OR23-1A / CBS 708.71 / DSM 1257 / FGSC 987).